A 33-amino-acid polypeptide reads, in one-letter code: Protein YdgV (33 aa).

The sequence is that of Protein YdgV from Escherichia coli (strain K12).